Reading from the N-terminus, the 246-residue chain is Phosphomannomutase 2 (246 aa).

Position 2 is an N-acetylalanine (Ala-2). Asp-12 acts as the Nucleophile in catalysis. The Mg(2+) site is built by Asp-12 and Asp-14. The active-site Proton donor/acceptor is Asp-14. Residues Arg-21, Arg-123, Arg-134, and Arg-141 each contribute to the alpha-D-mannose 1-phosphate site. N6-acetyllysine is present on Lys-149. Residues Ser-179 and Asp-181 each contribute to the alpha-D-mannose 1-phosphate site. Asp-209, Phe-221, Asp-223, and Thr-226 together coordinate Mg(2+).

This sequence belongs to the eukaryotic PMM family. As to quaternary structure, homodimer.

It localises to the cytoplasm. It carries out the reaction alpha-D-mannose 1-phosphate = D-mannose 6-phosphate. The protein operates within nucleotide-sugar biosynthesis; GDP-alpha-D-mannose biosynthesis; alpha-D-mannose 1-phosphate from D-fructose 6-phosphate: step 2/2. Involved in the synthesis of the GDP-mannose and dolichol-phosphate-mannose required for a number of critical mannosyl transfer reactions. The polypeptide is Phosphomannomutase 2 (PMM2) (Macaca fascicularis (Crab-eating macaque)).